The chain runs to 332 residues: Cysteine and histidine-rich domain-containing protein 1 (332 aa).

Position 2 is an N-acetylalanine (A2). The interaction with PPP5C stretch occupies residues 2–77; the sequence is ALLCYNRACG…KPPEPVKPEV (76 aa). Zn(2+) is bound by residues C5, C10, C24, H27, C42, and C43. CHORD domains are found at residues 5–64 and 157–216; these read CYNR…KGRH and CKNG…KGRH. Residue T47 is modified to Phosphothreonine. Residue S51 is modified to Phosphoserine. Zn(2+) contacts are provided by C59, H64, C157, C162, C176, H179, C194, C195, C211, and H216. Positions 62–82 are disordered; that stretch reads GRHNSEKPPEPVKPEVKTTEK. The segment covering 64-82 has biased composition (basic and acidic residues); sequence HNSEKPPEPVKPEVKTTEK. The tract at residues 65–316 is interaction with HSP90AA1 and HSP90AB1; it reads NSEKPPEPVK…AEPMQWASLE (252 aa). Residues 227-316 form the CS domain; sequence VVPCRHDWHQ…AEPMQWASLE (90 aa).

As to quaternary structure, interacts with HSP90AA1, HSP90AB1, PPP5C, ROCK1 and ROCK2.

Its function is as follows. Regulates centrosome duplication, probably by inhibiting the kinase activity of ROCK2. Proposed to act as co-chaperone for HSP90. May play a role in the regulation of NOD1 via a HSP90 chaperone complex. In vitro, has intrinsic chaperone activity. This function may be achieved by inhibiting association of ROCK2 with NPM1. Plays a role in ensuring the localization of the tyrosine kinase receptor EGFR to the plasma membrane, and thus ensures the subsequent regulation of EGFR activity and EGF-induced actin cytoskeleton remodeling. Involved in stress response. Prevents tumorigenesis. This is Cysteine and histidine-rich domain-containing protein 1 (CHORDC1) from Macaca fascicularis (Crab-eating macaque).